Here is a 413-residue protein sequence, read N- to C-terminus: Serine hydroxymethyltransferase (413 aa).

Residues Leu117 and Gly121–Leu123 each bind (6S)-5,6,7,8-tetrahydrofolate. Residue Lys226 is modified to N6-(pyridoxal phosphate)lysine. Residues Glu239 and Ser349–Phe351 each bind (6S)-5,6,7,8-tetrahydrofolate.

The protein belongs to the SHMT family. As to quaternary structure, homodimer. The cofactor is pyridoxal 5'-phosphate.

The protein resides in the cytoplasm. It carries out the reaction (6R)-5,10-methylene-5,6,7,8-tetrahydrofolate + glycine + H2O = (6S)-5,6,7,8-tetrahydrofolate + L-serine. It participates in one-carbon metabolism; tetrahydrofolate interconversion. It functions in the pathway amino-acid biosynthesis; glycine biosynthesis; glycine from L-serine: step 1/1. Functionally, catalyzes the reversible interconversion of serine and glycine with tetrahydrofolate (THF) serving as the one-carbon carrier. This reaction serves as the major source of one-carbon groups required for the biosynthesis of purines, thymidylate, methionine, and other important biomolecules. Also exhibits THF-independent aldolase activity toward beta-hydroxyamino acids, producing glycine and aldehydes, via a retro-aldol mechanism. The protein is Serine hydroxymethyltransferase of Bacillus cereus (strain ATCC 10987 / NRS 248).